Here is a 105-residue protein sequence, read N- to C-terminus: Vitelline membrane protein Vm32E (105 aa).

A signal peptide spans 1–17 (MHFIALIVAVCVAFAGA). In terms of domain architecture, VM spans 25–62 (GIAAPPCPKNYLFSCQPNLVPAPCAQEAASYGSAGAYA).

It belongs to the vitelline membrane family.

The protein localises to the secreted. Its function is as follows. Major early eggshell protein. The polypeptide is Vitelline membrane protein Vm32E (Drosophila ananassae (Fruit fly)).